The primary structure comprises 390 residues: Lipid-A-disaccharide synthase (390 aa).

This sequence belongs to the LpxB family.

It catalyses the reaction a lipid X + a UDP-2-N,3-O-bis[(3R)-3-hydroxyacyl]-alpha-D-glucosamine = a lipid A disaccharide + UDP + H(+). It participates in bacterial outer membrane biogenesis; LPS lipid A biosynthesis. Condensation of UDP-2,3-diacylglucosamine and 2,3-diacylglucosamine-1-phosphate to form lipid A disaccharide, a precursor of lipid A, a phosphorylated glycolipid that anchors the lipopolysaccharide to the outer membrane of the cell. The chain is Lipid-A-disaccharide synthase from Haemophilus influenzae (strain 86-028NP).